The sequence spans 288 residues: 2-hydroxy-6-oxononadienedioate/2-hydroxy-6-oxononatrienedioate hydrolase (288 aa).

His-267 acts as the Proton acceptor in catalysis.

The protein belongs to the AB hydrolase superfamily. MhpC family. In terms of assembly, homodimer.

The enzyme catalyses (2Z,4E)-2-hydroxy-6-oxonona-2,4-dienedioate + H2O = (2Z)-2-hydroxypenta-2,4-dienoate + succinate + H(+). It catalyses the reaction (2Z,4E,7E)-2-hydroxy-6-oxonona-2,4,7-trienedioate + H2O = (2Z)-2-hydroxypenta-2,4-dienoate + fumarate + H(+). It functions in the pathway aromatic compound metabolism; 3-phenylpropanoate degradation. Its function is as follows. Catalyzes the cleavage of the C5-C6 bond of 2-hydroxy-6-oxononadienedioate and 2-hydroxy-6-oxononatrienedioate, a dienol ring fission product of the bacterial meta-cleavage pathway for degradation of phenylpropionic acid. The polypeptide is 2-hydroxy-6-oxononadienedioate/2-hydroxy-6-oxononatrienedioate hydrolase (Escherichia coli O81 (strain ED1a)).